Here is a 94-residue protein sequence, read N- to C-terminus: Co-chaperonin GroES (94 aa).

Belongs to the GroES chaperonin family. Heptamer of 7 subunits arranged in a ring. Interacts with the chaperonin GroEL.

It localises to the cytoplasm. Together with the chaperonin GroEL, plays an essential role in assisting protein folding. The GroEL-GroES system forms a nano-cage that allows encapsulation of the non-native substrate proteins and provides a physical environment optimized to promote and accelerate protein folding. GroES binds to the apical surface of the GroEL ring, thereby capping the opening of the GroEL channel. In Caldanaerobacter subterraneus subsp. tengcongensis (strain DSM 15242 / JCM 11007 / NBRC 100824 / MB4) (Thermoanaerobacter tengcongensis), this protein is Co-chaperonin GroES.